A 600-amino-acid polypeptide reads, in one-letter code: Aspartate--tRNA(Asp/Asn) ligase (600 aa).

E174 contributes to the L-aspartate binding site. Positions 198-201 (QLFK) are aspartate. R220 provides a ligand contact to L-aspartate. Residues 220-222 (RDE) and Q229 each bind ATP. H457 lines the L-aspartate pocket. E491 is an ATP binding site. Residue R498 participates in L-aspartate binding. 543–546 (GLDR) contributes to the ATP binding site.

This sequence belongs to the class-II aminoacyl-tRNA synthetase family. Type 1 subfamily. In terms of assembly, homodimer.

It localises to the cytoplasm. The catalysed reaction is tRNA(Asx) + L-aspartate + ATP = L-aspartyl-tRNA(Asx) + AMP + diphosphate. Its function is as follows. Aspartyl-tRNA synthetase with relaxed tRNA specificity since it is able to aspartylate not only its cognate tRNA(Asp) but also tRNA(Asn). Reaction proceeds in two steps: L-aspartate is first activated by ATP to form Asp-AMP and then transferred to the acceptor end of tRNA(Asp/Asn). The chain is Aspartate--tRNA(Asp/Asn) ligase from Burkholderia vietnamiensis (strain G4 / LMG 22486) (Burkholderia cepacia (strain R1808)).